A 921-amino-acid polypeptide reads, in one-letter code: Probable TonB-dependent receptor NMB1497 (921 aa).

The N-terminal stretch at 1-25 (MRSSFRLKPICFYLMGVTLYHYSYA) is a signal peptide. One can recognise a TBDR plug domain in the interval 53–174 (DKKVFTDARA…LAGSANLRTL (122 aa)). One can recognise a TBDR beta-barrel domain in the interval 185 to 921 (TYGLLLKGLT…TFLMTMSYKF (737 aa)). The TonB C-terminal box signature appears at 904–921 (LTNFARGRTFLMTMSYKF).

The protein belongs to the TonB-dependent receptor family.

It localises to the cell outer membrane. In terms of biological role, probable receptor, TonB-dependent. The protein is Probable TonB-dependent receptor NMB1497 of Neisseria meningitidis serogroup B (strain ATCC BAA-335 / MC58).